The primary structure comprises 505 residues: GDP-Man:Man(3)GlcNAc(2)-PP-Dol alpha-1,2-mannosyltransferase (505 aa).

The Lumenal segment spans residues 1–3 (MDE). A helical membrane pass occupies residues 4-24 (LIMMVFVLFTIVLLLTVSMTL). At 25–145 (AALISTIVVL…KWVEASTYPR (121 aa)) the chain is on the cytoplasmic side. The segment at residues 146-166 (FTLIGQSLGSMILGWEALTKF) is an intramembrane region (helical). The Cytoplasmic portion of the chain corresponds to 167–402 (VPTIFLDSMG…VGIHTMYNEH (236 aa)). The segment at residues 403 to 423 (FGIGVVELMAAGVIPVANNSA) is an intramembrane region (helical). Topologically, residues 424–505 (GPKEDIVRHE…NNNSSSKKRN (82 aa)) are cytoplasmic.

Belongs to the glycosyltransferase group 1 family.

It is found in the endoplasmic reticulum membrane. The catalysed reaction is an alpha-D-Man-(1-&gt;3)-[alpha-D-Man-(1-&gt;6)]-beta-D-Man-(1-&gt;4)-beta-D-GlcNAc-(1-&gt;4)-alpha-D-GlcNAc-diphospho-di-trans,poly-cis-dolichol + 2 GDP-alpha-D-mannose = an alpha-D-Man-(1-&gt;2)-alpha-D-Man-(1-&gt;2)-alpha-D-Man-(1-&gt;3)-[alpha-D-Man-(1-&gt;6)]-beta-D-Man-(1-&gt;4)-beta-D-GlcNAc-(1-&gt;4)-alpha-D-GlcNAc-diphospho-di-trans,poly-cis-dolichol + 2 GDP + 2 H(+). The protein operates within protein modification; protein glycosylation. Functionally, GDP-Man:Man(3)GlcNAc(2)-PP-Dol alpha-1,2-mannosyltransferase that operates in the biosynthetic pathway of dolichol-linked oligosaccharides, the glycan precursors employed in protein asparagine (N)-glycosylation. The assembly of dolichol-linked oligosaccharides begins on the cytosolic side of the endoplasmic reticulum membrane and finishes in its lumen. The sequential addition of sugars to dolichol pyrophosphate produces dolichol-linked oligosaccharides containing fourteen sugars, including two GlcNAcs, nine mannoses and three glucoses. Once assembled, the oligosaccharide is transferred from the lipid to nascent proteins by oligosaccharyltransferases. Catalyzes, on the cytoplasmic face of the endoplasmic reticulum, the addition of the fourth and fifth mannose residues to the dolichol-linked oligosaccharide chain, to produce Man(5)GlcNAc(2)-PP-dolichol core oligosaccharide. The protein is GDP-Man:Man(3)GlcNAc(2)-PP-Dol alpha-1,2-mannosyltransferase (alg11) of Dictyostelium discoideum (Social amoeba).